A 102-amino-acid polypeptide reads, in one-letter code: Large ribosomal subunit protein bL21 (102 aa).

Belongs to the bacterial ribosomal protein bL21 family. As to quaternary structure, part of the 50S ribosomal subunit. Contacts protein L20.

Its function is as follows. This protein binds to 23S rRNA in the presence of protein L20. In Leifsonia xyli subsp. xyli (strain CTCB07), this protein is Large ribosomal subunit protein bL21.